We begin with the raw amino-acid sequence, 668 residues long: MVFNCYPVANAEESPMSSQNPTTVAWWSVRMRATGTLDDEPYHVSGAESLVAPGMIEQTVAGLTQRALAPGHTVKARQVRVSLDQLDVEPTIIPALPTELKECPDPVAARQYFVDVLSRFVPHPAEALRVLTEGPTMRGAAMVEAGTDRRLEADPLRGVRVTKFGDLTESAPGASLAHKKHHHEAVLLASKVAAAPGVLAEFCISDDPHYTRGYVCVDGVYTTVTNVKADGDPNGGRVILVDTARADPTTITTWLENHPVLIGPATASSQKATSWHGHLCGRLNAWRAAGLERRPRTFCSAQDPDAVTTDGPALLFSSSDYLGLSTEPKVQQAMNNTVRRLGSSSGGSRLTTGTSVAHHQAEHEIAAWLGYPQAVFMASGYQANIATIQLLADPHVTVISDAENHASLIDGCRLARARTVVVPHADLDVIDTALDCVTTDRALVLTEGVYSMGGDVAPVGELVEIAHRHGALVVVDDAHGIGTVGPTGRGATEELPASQRPDVLLGTASKALGVEGGFACLDETLATLMRNCARGYVFSSAPSPVVAAGVAAAVEYLRTDTRRVCSLQANVAQARLLLAEADLIPPSAAHDRGPIIRIPVGPESRAVAAQEELARRGLMVGAIRYPAVARGDAILRICLTARHTDEHIRILVTSLREVLDGALSDAPR.

R293 contacts substrate. 380–381 provides a ligand contact to pyridoxal 5'-phosphate; it reads GY. H405 contributes to the substrate binding site. Residues S451, 476–479, and 507–510 each bind pyridoxal 5'-phosphate; these read DDAH and TASK. Position 510 is an N6-(pyridoxal phosphate)lysine (K510).

In the N-terminal section; belongs to the BioW family. The protein in the C-terminal section; belongs to the class-II pyridoxal-phosphate-dependent aminotransferase family. BioF subfamily. Homodimer. Mg(2+) is required as a cofactor. It depends on pyridoxal 5'-phosphate as a cofactor.

The catalysed reaction is heptanedioate + ATP + CoA = 6-carboxyhexanoyl-CoA + AMP + diphosphate. The enzyme catalyses 6-carboxyhexanoyl-[ACP] + L-alanine + H(+) = (8S)-8-amino-7-oxononanoate + holo-[ACP] + CO2. It participates in metabolic intermediate metabolism; pimeloyl-CoA biosynthesis; pimeloyl-CoA from pimelate: step 1/1. Its pathway is cofactor biosynthesis; biotin biosynthesis. Catalyzes both the decarboxylative condensation of pimeloyl-[acyl-carrier protein] and L-alanine to produce 8-amino-7-oxononanoate (AON), [acyl-carrier protein], and carbon dioxide, and the transformation of pimelate into pimeloyl-CoA with concomitant hydrolysis of ATP to AMP. In Cutibacterium acnes (strain SK137) (Propionibacterium acnes), this protein is Biotin biosynthesis bifunctional protein BioWF.